The primary structure comprises 192 residues: I-Kappa-B like protein H1 (192 aa).

ANK repeat units lie at residues 94-126 (KGAQ…DING), 131-161 (AGLT…DVKV), and 165-192 (GKET…SKKM).

This sequence belongs to the polydnaviridae I-Kappa-B-like protein family.

Suppresses the host immune response through NF-kappa-B inactivation. Possesses ankyrin repeat domains required for NF-kappa-B binding but lacks the regulatory regions required for dissociation from NF-kappa-B and degradation. Therefore, prevents host NF-kappa-B release and subsequent activation. This Microplitis demolitor bracovirus (isolate Webb) (MdBV) protein is I-Kappa-B like protein H1 (H4).